The following is an 812-amino-acid chain: Lon protease (812 aa).

The Lon N-terminal domain occupies 22-215 (YAVLPLRDIV…KALSFMEAEI (194 aa)). 367 to 374 (GPPGVGKT) contributes to the ATP binding site. Residues 602-783 (EDQVGVVTGL…GEVLKHALVR (182 aa)) enclose the Lon proteolytic domain. Residues Ser689 and Lys732 contribute to the active site. The disordered stretch occupies residues 787–812 (PIEWTEQENPTAVPPVEDEAGASLAH).

It belongs to the peptidase S16 family. As to quaternary structure, homohexamer. Organized in a ring with a central cavity.

Its subcellular location is the cytoplasm. It catalyses the reaction Hydrolysis of proteins in presence of ATP.. In terms of biological role, ATP-dependent serine protease that mediates the selective degradation of mutant and abnormal proteins as well as certain short-lived regulatory proteins. Required for cellular homeostasis and for survival from DNA damage and developmental changes induced by stress. Degrades polypeptides processively to yield small peptide fragments that are 5 to 10 amino acids long. Binds to DNA in a double-stranded, site-specific manner. Required for wild-type virulence during the initial stages of infection in the mouse model, but not essential for the establishment and maintenance of chronic infection in this host. This is Lon protease from Brucella abortus (strain 2308).